The sequence spans 218 residues: Adenylate kinase (218 aa).

Gly10–Thr15 is a binding site for ATP. Positions Ser30–Val59 are NMP. AMP contacts are provided by residues Thr31, Arg36, Gly57–Val59, Gly85–Arg88, and Gln92. The interval Gly122 to Asp159 is LID. ATP-binding positions include Arg123 and Thr132–Tyr133. Residues Arg156 and Arg167 each contribute to the AMP site. Gly203 contacts ATP.

It belongs to the adenylate kinase family. In terms of assembly, monomer.

It is found in the cytoplasm. It carries out the reaction AMP + ATP = 2 ADP. The protein operates within purine metabolism; AMP biosynthesis via salvage pathway; AMP from ADP: step 1/1. In terms of biological role, catalyzes the reversible transfer of the terminal phosphate group between ATP and AMP. Plays an important role in cellular energy homeostasis and in adenine nucleotide metabolism. This chain is Adenylate kinase, found in Chlorobaculum parvum (strain DSM 263 / NCIMB 8327) (Chlorobium vibrioforme subsp. thiosulfatophilum).